A 147-amino-acid polypeptide reads, in one-letter code: Phage-like element PBSX protein XkdM (147 aa).

To B.subtilis YqbM.

This is Phage-like element PBSX protein XkdM (xkdM) from Bacillus subtilis (strain 168).